Here is a 111-residue protein sequence, read N- to C-terminus: Ig kappa chain V-III region PC 7940 (111 aa).

The interval 1-23 is framework-1; that stretch reads DIVLTQSPASLAVSLGQRATISC. A disulfide bridge links Cys23 with Cys92. Residues 24-38 are complementarity-determining-1; that stretch reads RASKSVSAFGYSYMH. Positions 39–53 are framework-2; that stretch reads WYQQKPGQPPKLLIY. A complementarity-determining-2 region spans residues 54 to 60; it reads LASNLES. Residues 61–92 are framework-3; it reads GVPARFSGSGSGTDFTLNIHPVEEEDAVTYYC. Residues 93-101 are complementarity-determining-3; it reads QHSRELPPT. The framework-4 stretch occupies residues 102 to 111; the sequence is FGGGTKLEIK.

This Mus musculus (Mouse) protein is Ig kappa chain V-III region PC 7940.